We begin with the raw amino-acid sequence, 202 residues long: MNSRIMFIGGVPGVGKTSISGYIARNTDIDIVLSSDYLREFLRPFAPQESHLETSVYDAWKFYGDMSDDNIIRGYLDQARPIMGGINRVIARALANGEDLIIESLYFVPDMMDEMVLKNAFLAYVYIDDPDLHRSRLEDRINYTHRNSPGSRLAAHLKEYRTIMDYSMDMARGRGIGLYSTDDYALARQRLLDDFRKFVDRR.

The catalysed reaction is (R)-3-phosphomevalonate + ATP = (R)-3,5-bisphosphomevalonate + ADP + H(+). It functions in the pathway isoprenoid biosynthesis; isopentenyl diphosphate biosynthesis via mevalonate pathway. Functionally, phosphorylates mevalonate 3-phosphate to form mevalonate 3,5-bisphosphate. Functions in an alternative mevalonate pathway, only present in extreme acidophiles of the Thermoplasmatales order, which passes through mevalonate 3-phosphate rather than mevalonate 5-phosphate. This is Mevalonate-3-phosphate 5-kinase from Thermoplasma acidophilum (strain ATCC 25905 / DSM 1728 / JCM 9062 / NBRC 15155 / AMRC-C165).